The chain runs to 513 residues: Histidine ammonia-lyase (513 aa).

Residues Ala-146–Gly-148 constitute a cross-link (5-imidazolinone (Ala-Gly)). 2,3-didehydroalanine (Ser) is present on Ser-147.

It belongs to the PAL/histidase family. Post-translationally, contains an active site 4-methylidene-imidazol-5-one (MIO), which is formed autocatalytically by cyclization and dehydration of residues Ala-Ser-Gly.

Its subcellular location is the cytoplasm. It carries out the reaction L-histidine = trans-urocanate + NH4(+). It functions in the pathway amino-acid degradation; L-histidine degradation into L-glutamate; N-formimidoyl-L-glutamate from L-histidine: step 1/3. The protein is Histidine ammonia-lyase of Shewanella oneidensis (strain ATCC 700550 / JCM 31522 / CIP 106686 / LMG 19005 / NCIMB 14063 / MR-1).